A 1258-amino-acid polypeptide reads, in one-letter code: Splicing factor, arginine/serine-rich 19 (1258 aa).

Disordered regions lie at residues 1–32 (MEEE…LSPS), 159–345 (KTVS…PRRR), 370–398 (GGPA…EEEP), 410–1034 (PRQP…PPPM), 1114–1154 (GSLP…DKYL), and 1223–1258 (FRKH…LPPL). Residues 7–27 (SRGKTEESGEDRGDGPPDRDP) are compositionally biased toward basic and acidic residues. Residues 193–207 (SSASSSPSPSPSSSS) are compositionally biased toward low complexity. Positions 208–223 (PSPPPPPPPPPPPALP) are enriched in pro residues. The segment covering 228 to 237 (DIYDPFHPTD) has biased composition (basic and acidic residues). Serine 241 bears the Phosphoserine mark. Polar residues predominate over residues 256–266 (TGSNPSSSAGT). Acidic residues predominate over residues 269–283 (PEEEEEEEEEEEEEG). At threonine 329 the chain carries Phosphothreonine. Residues 374–383 (LPLPPLPPTD) show a composition bias toward pro residues. The segment covering 384–395 (PEIEEGEIVQPE) has biased composition (acidic residues). Residues 414–426 (PASVATLASVAAP) show a composition bias toward low complexity. 2 positions are modified to phosphoserine: serine 444 and serine 449. Basic residues predominate over residues 480–491 (KILTQRRERYRQ). A phosphoserine mark is found at serine 493, serine 495, serine 512, and serine 520. 2 stretches are compositionally biased toward basic residues: residues 540-555 (TARR…RSRS) and 562-579 (RGSH…RRRS). A phosphoserine mark is found at serine 579 and serine 581. The span at 594–613 (RERHRGKRREGGKKKKKRSR) shows a compositional bias: basic residues. Over residues 614–625 (SRAEKRSGDLEK) the composition is skewed to basic and acidic residues. A Phosphothreonine modification is found at threonine 665. Phosphoserine occurs at positions 678 and 684. Residue tyrosine 691 is modified to Phosphotyrosine. Residues serine 693 and serine 697 each carry the phosphoserine modification. Basic and acidic residues-rich tracts occupy residues 698-711 (ADER…DRRR) and 721-743 (SREK…DRSS). 2 stretches are compositionally biased toward low complexity: residues 752–777 (SAPG…SCSS) and 795–806 (SSTTPAKDSSSS). A Glycyl lysine isopeptide (Lys-Gly) (interchain with G-Cter in SUMO2) cross-link involves residue lysine 814. Residues 815–833 (FSRDRESRSPFLKPDERAP) are compositionally biased toward basic and acidic residues. Serine 821 and serine 823 each carry phosphoserine. The segment covering 845 to 877 (KPKKTKAKAKAGAKKAKGTKGKTKPSKTRKKVR) has biased composition (basic residues). 4 positions are modified to phosphoserine: serine 878, serine 885, serine 912, and serine 914. Positions 924–937 (STPPPKVAPPPPAL) are enriched in pro residues. Residues threonine 925 and threonine 938 each carry the phosphothreonine modification. Residues 940–949 (DSQTVDSSCK) show a composition bias toward polar residues. Residue serine 941 is modified to Phosphoserine. Threonine 950 carries the phosphothreonine modification. Residues 971–986 (EEEEEEEEEEEEEEEQ) are compositionally biased toward acidic residues. The segment covering 987–1019 (QPATTTATSTAAAAPSTAPSAGSTAGDSGAEDG) has biased composition (low complexity). The necessary for interaction with the CTD domain of POLR2A stretch occupies residues 1133–1258 (PASDKREGSS…GGPGLPLPPL (126 aa)). Over residues 1135-1154 (SDKREGSSSSEGRGDTDKYL) the composition is skewed to basic and acidic residues. Pro residues predominate over residues 1246-1258 (PDKGGPGLPLPPL).

This sequence belongs to the splicing factor SR family. In terms of assembly, interacts with POLR2A.

The protein resides in the nucleus. Functionally, may function in pre-mRNA splicing. This chain is Splicing factor, arginine/serine-rich 19 (Scaf1), found in Rattus norvegicus (Rat).